Reading from the N-terminus, the 148-residue chain is Oleosin 16 kDa (148 aa).

The interval 1–21 (MADQHRGVIGGGGYGDRGGQE) is disordered. The residue at position 2 (Ala2) is an N-acetylalanine. The segment at 2-34 (ADQHRGVIGGGGYGDRGGQEQQEKQPFMMTALK) is polar. The span at 8-17 (VIGGGGYGDR) shows a compositional bias: gly residues. The tract at residues 35–106 (TVTAATAGGS…AALSVFSWMY (72 aa)) is hydrophobic. 3 helical membrane passes run 43–63 (GSML…LTVA), 66–86 (VLVI…LMAA), and 87–107 (GFVT…WMYK).

This sequence belongs to the oleosin family.

It localises to the lipid droplet. The protein localises to the membrane. In terms of biological role, may have a structural role to stabilize the lipid body during desiccation of the seed by preventing coalescence of the oil. Probably interacts with both lipid and phospholipid moieties of lipid bodies. May also provide recognition signals for specific lipase anchorage in lipolysis during seedling growth. The polypeptide is Oleosin 16 kDa (OLE16) (Oryza sativa subsp. japonica (Rice)).